A 257-amino-acid polypeptide reads, in one-letter code: Triosephosphate isomerase (257 aa).

Substrate-binding residues include Asn12 and Lys14. The active-site Electrophile is His98. The Proton acceptor role is filled by Glu169.

This sequence belongs to the triosephosphate isomerase family. In terms of assembly, homodimer.

It catalyses the reaction D-glyceraldehyde 3-phosphate = dihydroxyacetone phosphate. The protein operates within carbohydrate biosynthesis; gluconeogenesis. It participates in carbohydrate degradation; glycolysis; D-glyceraldehyde 3-phosphate from glycerone phosphate: step 1/1. The polypeptide is Triosephosphate isomerase (tpiA) (Dictyostelium discoideum (Social amoeba)).